A 660-amino-acid polypeptide reads, in one-letter code: Macrolide export ATP-binding/permease protein MacB (660 aa).

Residues 10–248 (LVLENIVRKF…AKGQALQGKQ (239 aa)) form the ABC transporter domain. Position 46 to 53 (46 to 53 (GASGSGKS)) interacts with ATP. A run of 4 helical transmembrane segments spans residues 285–305 (FLTM…VALG), 532–552 (ILTL…GIGV), 593–613 (IIGG…FVLF), and 625–645 (SIII…FSPA).

The protein belongs to the ABC transporter superfamily. Macrolide exporter (TC 3.A.1.122) family. Homodimer.

Its subcellular location is the cell inner membrane. In terms of biological role, non-canonical ABC transporter that contains transmembrane domains (TMD), which form a pore in the inner membrane, and an ATP-binding domain (NBD), which is responsible for energy generation. Confers resistance against macrolides. This is Macrolide export ATP-binding/permease protein MacB from Bartonella quintana (strain Toulouse) (Rochalimaea quintana).